Consider the following 141-residue polypeptide: Flagellar assembly factor FliW (141 aa).

It belongs to the FliW family. In terms of assembly, interacts with translational regulator CsrA and flagellin(s).

It is found in the cytoplasm. Its function is as follows. Acts as an anti-CsrA protein, binds CsrA and prevents it from repressing translation of its target genes, one of which is flagellin. Binds to flagellin and participates in the assembly of the flagellum. In Clostridium acetobutylicum (strain ATCC 824 / DSM 792 / JCM 1419 / IAM 19013 / LMG 5710 / NBRC 13948 / NRRL B-527 / VKM B-1787 / 2291 / W), this protein is Flagellar assembly factor FliW.